The following is a 944-amino-acid chain: Spindle pole body component 110 (944 aa).

A Phosphothreonine modification is found at Thr-18. The tract at residues 23-110 (IKSKRNTTQT…RKRNLIDDLK (88 aa)) is disordered. The span at 28–46 (NTTQTQVVSPTKVPNANNG) shows a compositional bias: polar residues. Residues 54–59 (KKRQRR) carry the Nuclear localization signal motif. Ser-60 is subject to Phosphoserine; by MPS1. 2 positions are modified to phosphothreonine; by MPS1: Thr-64 and Thr-68. The segment covering 67–78 (STRLFSEASQFD) has biased composition (polar residues). A Phosphoserine modification is found at Ser-80. Basic and acidic residues predominate over residues 96–110 (NVDKSRKRNLIDDLK). A coiled-coil region spans residues 119–799 (LKEQEVREHQ…ILNERRKDND (681 aa)). Ser-529 carries the phosphoserine modification. 2 consecutive short sequence motifs (nuclear localization signal) follow at residues 726–731 (KEKYKR) and 742–747 (RLRREK). Residues 900–927 (SFKTVALLVLACVRMKRIAFYRRSDDNR) form a calmodulin-binding region.

The protein belongs to the SPC110 family. As to quaternary structure, homodimer. Component of the SPC110 complex containing at least CMD1, SPC29 and SCP110. Interacts with SPC97 and SPC98.

It is found in the nucleus. The protein localises to the cytoplasm. The protein resides in the cytoskeleton. It localises to the microtubule organizing center. Its subcellular location is the spindle pole body. Its function is as follows. Component of the spindle pole body (SPB) required for the proper execution of spindle pole body (SPB) duplication. Potential role in cross-linking filaments or anchoring other molecules. It is essential for growth. The sequence is that of Spindle pole body component 110 (SPC110) from Saccharomyces cerevisiae (strain YJM789) (Baker's yeast).